Consider the following 432-residue polypeptide: Glutamyl-tRNA reductase (432 aa).

Residues 55–58 (TCNR), Ser-114, 119–121 (ETQ), and Gln-125 each bind substrate. Catalysis depends on Cys-56, which acts as the Nucleophile. 194–199 (GAGEMI) is a binding site for NADP(+).

It belongs to the glutamyl-tRNA reductase family. As to quaternary structure, homodimer.

It carries out the reaction (S)-4-amino-5-oxopentanoate + tRNA(Glu) + NADP(+) = L-glutamyl-tRNA(Glu) + NADPH + H(+). The protein operates within porphyrin-containing compound metabolism; protoporphyrin-IX biosynthesis; 5-aminolevulinate from L-glutamyl-tRNA(Glu): step 1/2. Its function is as follows. Catalyzes the NADPH-dependent reduction of glutamyl-tRNA(Glu) to glutamate 1-semialdehyde (GSA). This chain is Glutamyl-tRNA reductase, found in Burkholderia ambifaria (strain MC40-6).